Consider the following 235-residue polypeptide: Aspartate/glutamate leucyltransferase (235 aa).

The protein belongs to the R-transferase family. Bpt subfamily.

It localises to the cytoplasm. The catalysed reaction is N-terminal L-glutamyl-[protein] + L-leucyl-tRNA(Leu) = N-terminal L-leucyl-L-glutamyl-[protein] + tRNA(Leu) + H(+). It carries out the reaction N-terminal L-aspartyl-[protein] + L-leucyl-tRNA(Leu) = N-terminal L-leucyl-L-aspartyl-[protein] + tRNA(Leu) + H(+). Its function is as follows. Functions in the N-end rule pathway of protein degradation where it conjugates Leu from its aminoacyl-tRNA to the N-termini of proteins containing an N-terminal aspartate or glutamate. The polypeptide is Aspartate/glutamate leucyltransferase (Pseudomonas fluorescens (strain SBW25)).